The chain runs to 949 residues: L-fucokinase/L-fucose-1-P guanylyltransferase (949 aa).

The segment at 25-191 is fucose-1-phosphate guanylyltransferase; the sequence is DWFCTSDPVG…DFMLQKPSLA (167 aa). The tract at residues 559-949 is L-fucokinase; that stretch reads LLRDGLLDGI…SDKGFQVSRS (391 aa).

It belongs to the GHMP kinase family. Homotetramer. Requires Mn(2+) as cofactor. Mg(2+) is required as a cofactor.

The enzyme catalyses L-fucose + ATP = beta-L-fucose 1-phosphate + ADP + H(+). It catalyses the reaction beta-L-fucose 1-phosphate + GTP + H(+) = GDP-beta-L-fucose + diphosphate. Its function is as follows. Bifunctional enzyme involved in the salvage pathway of GDP-fucose synthesis. Catalyzes two successive reactions, the ATP-dependent phosphorylation of L-fucose to L-fucose 1-phosphate, and its guanylylation to GDP-L-fucose. GDP-fucose is an important fucose donor in the process of fucosylated oligosaccharides formation. The protein is L-fucokinase/L-fucose-1-P guanylyltransferase of Bacteroides fragilis.